We begin with the raw amino-acid sequence, 131 residues long: Small ribosomal subunit protein uS8 (131 aa).

Belongs to the universal ribosomal protein uS8 family. In terms of assembly, part of the 30S ribosomal subunit. Contacts proteins S5 and S12.

Its function is as follows. One of the primary rRNA binding proteins, it binds directly to 16S rRNA central domain where it helps coordinate assembly of the platform of the 30S subunit. This is Small ribosomal subunit protein uS8 from Delftia acidovorans (strain DSM 14801 / SPH-1).